The following is a 337-amino-acid chain: Ketol-acid reductoisomerase (NADP(+)) (337 aa).

The 180-residue stretch at 1 to 180 (MKIYYDTDVN…GGGRAGIIET (180 aa)) folds into the KARI N-terminal Rossmann domain. NADP(+)-binding positions include 24–27 (YGSQ), R47, S51, and 81–84 (DELQ). H106 is a catalytic residue. Residue G132 participates in NADP(+) binding. Residues 181-326 (TFKDETETDL…EKLRAMMPWL (146 aa)) form the KARI C-terminal knotted domain. Residues D189, E193, E225, and E229 each coordinate Mg(2+). Substrate is bound at residue S250.

Belongs to the ketol-acid reductoisomerase family. The cofactor is Mg(2+).

It catalyses the reaction (2R)-2,3-dihydroxy-3-methylbutanoate + NADP(+) = (2S)-2-acetolactate + NADPH + H(+). The catalysed reaction is (2R,3R)-2,3-dihydroxy-3-methylpentanoate + NADP(+) = (S)-2-ethyl-2-hydroxy-3-oxobutanoate + NADPH + H(+). It participates in amino-acid biosynthesis; L-isoleucine biosynthesis; L-isoleucine from 2-oxobutanoate: step 2/4. Its pathway is amino-acid biosynthesis; L-valine biosynthesis; L-valine from pyruvate: step 2/4. Its function is as follows. Involved in the biosynthesis of branched-chain amino acids (BCAA). Catalyzes an alkyl-migration followed by a ketol-acid reduction of (S)-2-acetolactate (S2AL) to yield (R)-2,3-dihydroxy-isovalerate. In the isomerase reaction, S2AL is rearranged via a Mg-dependent methyl migration to produce 3-hydroxy-3-methyl-2-ketobutyrate (HMKB). In the reductase reaction, this 2-ketoacid undergoes a metal-dependent reduction by NADPH to yield (R)-2,3-dihydroxy-isovalerate. In Thermodesulfovibrio yellowstonii (strain ATCC 51303 / DSM 11347 / YP87), this protein is Ketol-acid reductoisomerase (NADP(+)).